Here is a 341-residue protein sequence, read N- to C-terminus: Phenylalanine--tRNA ligase alpha subunit (341 aa).

E256 contributes to the Mg(2+) binding site.

This sequence belongs to the class-II aminoacyl-tRNA synthetase family. Phe-tRNA synthetase alpha subunit type 1 subfamily. In terms of assembly, tetramer of two alpha and two beta subunits. Requires Mg(2+) as cofactor.

The protein resides in the cytoplasm. The catalysed reaction is tRNA(Phe) + L-phenylalanine + ATP = L-phenylalanyl-tRNA(Phe) + AMP + diphosphate + H(+). This Leptospira biflexa serovar Patoc (strain Patoc 1 / Ames) protein is Phenylalanine--tRNA ligase alpha subunit.